The chain runs to 72 residues: Putative membrane protein insertion efficiency factor (72 aa).

This sequence belongs to the UPF0161 family.

The protein resides in the cell inner membrane. Could be involved in insertion of integral membrane proteins into the membrane. This is Putative membrane protein insertion efficiency factor from Myxococcus xanthus (strain DK1622).